Here is a 153-residue protein sequence, read N- to C-terminus: Aspartate carbamoyltransferase regulatory chain (153 aa).

Residues C109, C114, C138, and C141 each contribute to the Zn(2+) site.

Belongs to the PyrI family. Contains catalytic and regulatory chains. The cofactor is Zn(2+).

Its function is as follows. Involved in allosteric regulation of aspartate carbamoyltransferase. The polypeptide is Aspartate carbamoyltransferase regulatory chain (Cronobacter sakazakii (strain ATCC BAA-894) (Enterobacter sakazakii)).